The sequence spans 1239 residues: Inner tegument protein (1239 aa).

4 disordered regions span residues 1-20 (MASA…DAQP), 669-704 (GESP…GGGP), 959-980 (RPPP…DTPP), and 1087-1239 (GRNA…AEDE). An interaction with large tegument protein region spans residues 615-1239 (NELPKTRSLA…RPPRPTAEDE (625 aa)). The segment covering 1112–1123 (DSSPFSFSSSDF) has biased composition (low complexity). Gly residues predominate over residues 1139–1148 (VPGGGGGGEG). The segment covering 1151–1170 (EEERERPSDIDTAARARKVE) has biased composition (basic and acidic residues). The span at 1180-1189 (RTTPSPSRRA) shows a compositional bias: low complexity. Over residues 1219 to 1232 (VRPRTRRGATRRPP) the composition is skewed to basic residues.

It belongs to the herpesviridae inner tegument protein family. As to quaternary structure, interacts (via C-terminus) with the large tegument protein/LTP (via N-terminus).

The protein localises to the virion tegument. It is found in the host cytoplasm. The protein resides in the host nucleus. Its subcellular location is the host Golgi apparatus. It localises to the host trans-Golgi network. In terms of biological role, plays an essential role in cytoplasmic secondary envelopment during viral egress. Interacts with the capsid via the large tegument protein/LTP and participates in its transport to the host trans-Golgi network (TGN) where secondary envelopment occurs. Modulates tegumentation and capsid accumulation at the viral assembly complex. In Homo sapiens (Human), this protein is Inner tegument protein.